The sequence spans 277 residues: Proteasome subunit beta type-7 (277 aa).

The propeptide at 1–43 (MAAVSVFQPPVGGFSFDNCRRNAVLEADFAKKGFKLPKARKTG) is removed in mature form. Residue Thr-44 is the Nucleophile of the active site.

This sequence belongs to the peptidase T1B family. The 26S proteasome consists of a 20S proteasome core and two 19S regulatory subunits. The 20S proteasome core is a barrel-shaped complex made of 28 subunits that are arranged in four stacked rings. The two outer rings are each formed by seven alpha subunits, and the two inner rings are formed by seven beta subunits. The proteolytic activity is exerted by three beta-subunits PSMB5, PSMB6 and PSMB7.

It localises to the cytoplasm. The protein localises to the nucleus. It catalyses the reaction Cleavage of peptide bonds with very broad specificity.. In terms of biological role, component of the 20S core proteasome complex involved in the proteolytic degradation of most intracellular proteins. This complex plays numerous essential roles within the cell by associating with different regulatory particles. Associated with two 19S regulatory particles, forms the 26S proteasome and thus participates in the ATP-dependent degradation of ubiquitinated proteins. The 26S proteasome plays a key role in the maintenance of protein homeostasis by removing misfolded or damaged proteins that could impair cellular functions, and by removing proteins whose functions are no longer required. Associated with the PA200 or PA28, the 20S proteasome mediates ubiquitin-independent protein degradation. This type of proteolysis is required in several pathways including spermatogenesis (20S-PA200 complex) or generation of a subset of MHC class I-presented antigenic peptides (20S-PA28 complex). Within the 20S core complex, PSMB7 displays a trypsin-like activity. This Mus musculus (Mouse) protein is Proteasome subunit beta type-7 (Psmb7).